A 97-amino-acid chain; its full sequence is Citrate lyase acyl carrier protein (97 aa).

S14 is subject to O-(phosphoribosyl dephospho-coenzyme A)serine.

The protein belongs to the CitD family. Oligomer with a subunit composition of (alpha,beta,gamma)6.

It localises to the cytoplasm. Covalent carrier of the coenzyme of citrate lyase. The chain is Citrate lyase acyl carrier protein from Rhodopseudomonas palustris (strain BisA53).